The following is a 517-amino-acid chain: UDP-N-acetylmuramoylalanine--D-glutamate ligase (517 aa).

143–149 (GTNGKTT) is an ATP binding site.

It belongs to the MurCDEF family.

The protein resides in the cytoplasm. The enzyme catalyses UDP-N-acetyl-alpha-D-muramoyl-L-alanine + D-glutamate + ATP = UDP-N-acetyl-alpha-D-muramoyl-L-alanyl-D-glutamate + ADP + phosphate + H(+). It participates in cell wall biogenesis; peptidoglycan biosynthesis. Cell wall formation. Catalyzes the addition of glutamate to the nucleotide precursor UDP-N-acetylmuramoyl-L-alanine (UMA). The chain is UDP-N-acetylmuramoylalanine--D-glutamate ligase from Leifsonia xyli subsp. xyli (strain CTCB07).